Consider the following 87-residue polypeptide: Small ribosomal subunit protein uS15 (87 aa).

The disordered stretch occupies residues 1-22 (MSEINKAEIVASNARAPSDTGS).

The protein belongs to the universal ribosomal protein uS15 family. Part of the 30S ribosomal subunit. Forms a bridge to the 50S subunit in the 70S ribosome, contacting the 23S rRNA.

Its function is as follows. One of the primary rRNA binding proteins, it binds directly to 16S rRNA where it helps nucleate assembly of the platform of the 30S subunit by binding and bridging several RNA helices of the 16S rRNA. Functionally, forms an intersubunit bridge (bridge B4) with the 23S rRNA of the 50S subunit in the ribosome. The chain is Small ribosomal subunit protein uS15 from Leptothrix cholodnii (strain ATCC 51168 / LMG 8142 / SP-6) (Leptothrix discophora (strain SP-6)).